A 218-amino-acid polypeptide reads, in one-letter code: Glutathione S-transferase Mu 1 (218 aa).

Residues 2 to 88 enclose the GST N-terminal domain; that stretch reads PMILGYWNVR…YLARKHHLDG (87 aa). 7 to 8 provides a ligand contact to glutathione; it reads YW. Thr34 is subject to Phosphothreonine. Glutathione-binding positions include 43–46, Lys50, and 59–60; these read RSQW and NL. Position 67 is a phosphoserine (Ser67). 72–73 provides a ligand contact to glutathione; that stretch reads QS. Residues 90–208 form the GST C-terminal domain; that stretch reads TEEERIRADI…KSSRYIATPI (119 aa). Tyr116 is a binding site for substrate. Ser210 is subject to Phosphoserine.

In terms of assembly, homodimer.

The protein localises to the cytoplasm. The enzyme catalyses RX + glutathione = an S-substituted glutathione + a halide anion + H(+). It carries out the reaction prostaglandin A2 + glutathione = prostaglandin A2-S-(R)-glutathione. It catalyses the reaction prostaglandin J2 + glutathione = prostaglandin J2-S-(R)-glutathione. The catalysed reaction is prostaglandin J2 + glutathione = prostaglandin J2-S-(S)-glutathione. The enzyme catalyses prostaglandin A2 + glutathione = prostaglandin A2-S-(S)-glutathione. It carries out the reaction 11(S)-hydroxy-14(S),15(S)-epoxy-(5Z,8Z,12E)-eicosatrienoate + glutathione = (11S,15S)-dihydroxy-14(R)-S-glutathionyl-(5Z,8Z,12E)-eicosatrienoate. In terms of biological role, conjugation of reduced glutathione to a wide number of exogenous and endogenous hydrophobic electrophiles. Involved in the formation of glutathione conjugates of both prostaglandin A2 (PGA2) and prostaglandin J2 (PGJ2). Participates in the formation of novel hepoxilin regioisomers. The sequence is that of Glutathione S-transferase Mu 1 from Mus musculus (Mouse).